The sequence spans 517 residues: Membrane-bound lytic murein transglycosylase F (517 aa).

An N-terminal signal peptide occupies residues 1–32; that stretch reads MKKFKINYLLIGIVTLLLAAALWPSIPWFGKA. The segment at 33–269 is non-LT domain; that stretch reads ENRIAAIQSR…RLEEKYLGHG (237 aa). Residues 270–517 form an LT domain region; the sequence is GDFDYVDTRS…PNTLVQAPRR (248 aa). Glu-314 is a catalytic residue.

This sequence in the N-terminal section; belongs to the bacterial solute-binding protein 3 family. It in the C-terminal section; belongs to the transglycosylase Slt family.

It localises to the cell outer membrane. The enzyme catalyses Exolytic cleavage of the (1-&gt;4)-beta-glycosidic linkage between N-acetylmuramic acid (MurNAc) and N-acetylglucosamine (GlcNAc) residues in peptidoglycan, from either the reducing or the non-reducing ends of the peptidoglycan chains, with concomitant formation of a 1,6-anhydrobond in the MurNAc residue.. Functionally, murein-degrading enzyme that degrades murein glycan strands and insoluble, high-molecular weight murein sacculi, with the concomitant formation of a 1,6-anhydromuramoyl product. Lytic transglycosylases (LTs) play an integral role in the metabolism of the peptidoglycan (PG) sacculus. Their lytic action creates space within the PG sacculus to allow for its expansion as well as for the insertion of various structures such as secretion systems and flagella. The sequence is that of Membrane-bound lytic murein transglycosylase F from Enterobacter sp. (strain 638).